The primary structure comprises 228 residues: Phosphoribosylformylglycinamidine synthase subunit PurQ (228 aa).

In terms of domain architecture, Glutamine amidotransferase type-1 spans 4–226 (AVVVFPGSNC…VNYWRETHVV (223 aa)). Catalysis depends on Cys86, which acts as the Nucleophile. Catalysis depends on residues His195 and Glu197.

As to quaternary structure, part of the FGAM synthase complex composed of 1 PurL, 1 PurQ and 2 PurS subunits.

It localises to the cytoplasm. The enzyme catalyses N(2)-formyl-N(1)-(5-phospho-beta-D-ribosyl)glycinamide + L-glutamine + ATP + H2O = 2-formamido-N(1)-(5-O-phospho-beta-D-ribosyl)acetamidine + L-glutamate + ADP + phosphate + H(+). It catalyses the reaction L-glutamine + H2O = L-glutamate + NH4(+). It participates in purine metabolism; IMP biosynthesis via de novo pathway; 5-amino-1-(5-phospho-D-ribosyl)imidazole from N(2)-formyl-N(1)-(5-phospho-D-ribosyl)glycinamide: step 1/2. Functionally, part of the phosphoribosylformylglycinamidine synthase complex involved in the purines biosynthetic pathway. Catalyzes the ATP-dependent conversion of formylglycinamide ribonucleotide (FGAR) and glutamine to yield formylglycinamidine ribonucleotide (FGAM) and glutamate. The FGAM synthase complex is composed of three subunits. PurQ produces an ammonia molecule by converting glutamine to glutamate. PurL transfers the ammonia molecule to FGAR to form FGAM in an ATP-dependent manner. PurS interacts with PurQ and PurL and is thought to assist in the transfer of the ammonia molecule from PurQ to PurL. This Geobacillus kaustophilus (strain HTA426) protein is Phosphoribosylformylglycinamidine synthase subunit PurQ.